The primary structure comprises 145 residues: uncharacterized protein (145 aa).

The interval 1-59 is disordered; that stretch reads MSTGTPHYAADRSKSRKSNNNRSIPFRTPTTQKVVKTSIRLGPVNPPTPTRNTQGGHGF.

This is an uncharacterized protein from Caenorhabditis elegans.